The primary structure comprises 361 residues: 5-formaminoimidazole-4-carboxamide-1-(beta)-D-ribofuranosyl 5'-monophosphate synthetase (361 aa).

Residues His-27 and Ser-94 each contribute to the 5-amino-1-(5-phospho-beta-D-ribosyl)imidazole-4-carboxamide site. In terms of domain architecture, ATP-grasp spans 116–348 (RQILRWEAER…MGQRIAKEIK (233 aa)). ATP is bound by residues 146 to 208 (PDEI…TNYC) and Glu-230. 5-amino-1-(5-phospho-beta-D-ribosyl)imidazole-4-carboxamide is bound at residue Asn-258. Residues Gln-297 and Glu-310 each coordinate Mg(2+).

This sequence belongs to the phosphohexose mutase family. Mg(2+) serves as cofactor. Requires Mn(2+) as cofactor.

The catalysed reaction is 5-amino-1-(5-phospho-beta-D-ribosyl)imidazole-4-carboxamide + formate + ATP = 5-formamido-1-(5-phospho-D-ribosyl)imidazole-4-carboxamide + ADP + phosphate. It participates in purine metabolism; IMP biosynthesis via de novo pathway; 5-formamido-1-(5-phospho-D-ribosyl)imidazole-4-carboxamide from 5-amino-1-(5-phospho-D-ribosyl)imidazole-4-carboxamide (formate route): step 1/1. Its function is as follows. Catalyzes the ATP- and formate-dependent formylation of 5-aminoimidazole-4-carboxamide-1-beta-d-ribofuranosyl 5'-monophosphate (AICAR) to 5-formaminoimidazole-4-carboxamide-1-beta-d-ribofuranosyl 5'-monophosphate (FAICAR) in the absence of folates. This Methanococcus aeolicus (strain ATCC BAA-1280 / DSM 17508 / OCM 812 / Nankai-3) protein is 5-formaminoimidazole-4-carboxamide-1-(beta)-D-ribofuranosyl 5'-monophosphate synthetase.